The chain runs to 151 residues: MSAATVILILLMLLGILGRSNVIAAAAAFLLLLQFTSLQRFYPILERRALEAGLIFLVVSVLVPFASGRVAPRDMLQSFVSLPGLIAIASGIIATHMNCQGLELLQRFPQMMIGMVIGSIIGVAFFGGIPVGPLMAGGIAALLVHLMAWLR.

Transmembrane regions (helical) follow at residues 6 to 26, 52 to 72, 75 to 95, and 111 to 131; these read VILI…IAAA, AGLI…RVAP, MLQS…IIAT, and MMIG…GIPV.

Belongs to the UPF0756 family.

It localises to the cell membrane. This chain is UPF0756 membrane protein Moth_0120, found in Moorella thermoacetica (strain ATCC 39073 / JCM 9320).